The primary structure comprises 187 residues: Signal peptidase complex catalytic subunit SEC11 (187 aa).

The Cytoplasmic portion of the chain corresponds to 1–14 (MLSSLSPYMANPRN). Residues 15-33 (TLSQVLNFGLVLSSAFMVW) traverse the membrane as a helical; Signal-anchor for type II membrane protein segment. At 34-187 (KTLSVITNST…MGLMVMLQRE (154 aa)) the chain is on the lumenal side. A glycan (N-linked (GlcNAc...) asparagine) is linked at Asn-41. Active-site charge relay system residues include Ser-53 and His-92. An N-linked (GlcNAc...) asparagine glycan is attached at Asn-125. The active-site Charge relay system is Asp-129. The interval 173 to 184 (VLLGFMGLMVML) is C-terminal short (CTS) helix.

The protein belongs to the peptidase S26B family. As to quaternary structure, component of the signal peptidase complex (SPC) composed of a catalytic subunit SEC11 and three accessory subunits SPC1, SPC2 and SPC3. The complex induces a local thinning of the ER membrane which is used to measure the length of the signal peptide (SP) h-region of protein substrates. This ensures the selectivity of the complex towards h-regions shorter than 18-20 amino acids. SPC associates with the translocon complex.

It localises to the endoplasmic reticulum membrane. It carries out the reaction Cleavage of hydrophobic, N-terminal signal or leader sequences from secreted and periplasmic proteins.. In terms of biological role, catalytic component of the signal peptidase complex (SPC) which catalyzes the cleavage of N-terminal signal sequences from nascent proteins as they are translocated into the lumen of the endoplasmic reticulum. Specifically cleaves N-terminal signal peptides that contain a hydrophobic alpha-helix (h-region) shorter than 18-20 amino acids. This is Signal peptidase complex catalytic subunit SEC11 (SEC11) from Ajellomyces capsulatus (strain H88) (Darling's disease fungus).